Here is a 277-residue protein sequence, read N- to C-terminus: Release factor glutamine methyltransferase (277 aa).

Residues glycine 117–glycine 121, aspartate 140, tryptophan 168, and asparagine 183 each bind S-adenosyl-L-methionine. Asparagine 183–tyrosine 186 contacts substrate.

The protein belongs to the protein N5-glutamine methyltransferase family. PrmC subfamily.

It carries out the reaction L-glutaminyl-[peptide chain release factor] + S-adenosyl-L-methionine = N(5)-methyl-L-glutaminyl-[peptide chain release factor] + S-adenosyl-L-homocysteine + H(+). In terms of biological role, methylates the class 1 translation termination release factors RF1/PrfA and RF2/PrfB on the glutamine residue of the universally conserved GGQ motif. The sequence is that of Release factor glutamine methyltransferase from Salmonella typhimurium (strain LT2 / SGSC1412 / ATCC 700720).